A 217-amino-acid chain; its full sequence is Pyrophosphatase PpaX (217 aa).

The Nucleophile role is filled by aspartate 11.

Belongs to the HAD-like hydrolase superfamily. PpaX family. It depends on Mg(2+) as a cofactor.

The enzyme catalyses diphosphate + H2O = 2 phosphate + H(+). Hydrolyzes pyrophosphate formed during P-Ser-HPr dephosphorylation by HPrK/P. Might play a role in controlling the intracellular pyrophosphate pool. This Listeria monocytogenes serotype 4b (strain CLIP80459) protein is Pyrophosphatase PpaX.